The following is a 1265-amino-acid chain: MSRTASYAGMTTPVKDKEGHGIPCLQPIDVVECTYQYFTKSQNKLSLRVGDLIYVLTKGSNGWWDGVLIRHSANNNNNSLILDRGWFPPSFTRSILNELHGVPEIGNELEIFQAGLNLKLELSSNPVILSLEDFLDCCRDIEFKEQLAWSPIPVHERKGCCELLYYNQDLDVYCRTLPYLPQNQVETVNDYSSFPAISKIAGKKMPITSSPDLFYLNDCDVVYWYDLTRLVCHYVNLTERDLLANEREKFLTSLDLLTAQITCVYMLFRNLRLVEDSFKKTLKKLIYTLSRFSINANIWFHSTPFEEREAIASQKDPERRSPLLQSILGTFQKFHFLLRLLHFLSNPNELTILPQLTPRFFKDSFNTISWNNPFLRKHLNQHMSHDLPRQMIKAVAGASGIVAENNDEIPASKQGTSCSSETSHHSPSAPFQRRRRGTIFSNVPGSSDESDTIWSKRKKPYPLNEETLSLVRARKEQLDAKLKQMIKSANEYLSNTANFSKMLNFEMNFKTYEEVSGTIPIIDILENLDLTIYLNLRELGDENRVFDEDVAIDDEDKEFLKHSLSSLSYILSDYFNMKQYFHDVVVKFIIVAQHLTLEDPFVFSPMQNDLPTGYYEPMKPSSLNLDNAKDKKNGSQNTDIQEEEDEYEPDPDSLILFHNLINQDSDFNDLKFFNLAHVFKKSCDDYFDVLKLSIEFVNRLILERENLLNYAARMMKNNITELLLRGEEGYGSYDGGETAEKSDTNAVYADSDTKDNDEWRDSQVKLPRYLQREYDSELIWGSNNRIKGGSKHALISYLTDNEKKDLFFNITFLITFRSIFTTTEFLSYLISQYNLDPPEDLCFEEYNEWVTKKLIPVKCRVVEIMTTFFKQYWFPGYDEPDLATLNLDYFAQVAIKENITGSVELLKEVNQKFKHGNMQEATAPMKTLDQQICQEHYWGTLYSTTESILAVDPVLFATQLTILEHEIYCEITIFDCLQKIWKNKYTKSYGASPGLNEFISFANKLTNFISYSIVKEADKSKRAKLLSHFIFIAEYCRKFNNFSSMTAIISALYSSSIYRLEKTWQAVIPQTRDLLQSLDKLMDPKKNFINYRSELKSLHSAPCVPFFGVYLSDLTFTDSGNPDYLVLEHGLKGVHDEKKYINFNKRSRLVDILQEIIYFKKTHYDFTKDRTVIECISNSLENIPHIEKQYQLSLIIEPKPRKKVVPNSNSNNKSQEKSRDDQTDEGKTSTKKDRFSKFQLHKTKKKAPKVSKQRRRMFDFLLSVD.

The SH3 domain maps to 26–97; it reads QPIDVVECTY…PPSFTRSILN (72 aa). Disordered stretches follow at residues 409–454 and 623–648; these read IPAS…DTIW and LNLD…DEYE. The segment covering 416 to 428 has biased composition (low complexity); sequence TSCSSETSHHSPS. An N-terminal Ras-GEF domain is found at 782–914; the sequence is SNNRIKGGSK…LLKEVNQKFK (133 aa). Residues 952 to 1199 enclose the Ras-GEF domain; it reads DPVLFATQLT…YQLSLIIEPK (248 aa). A disordered region spans residues 1201 to 1252; the sequence is RKKVVPNSNSNNKSQEKSRDDQTDEGKTSTKKDRFSKFQLHKTKKKAPKVSK. Basic and acidic residues predominate over residues 1214–1236; the sequence is SQEKSRDDQTDEGKTSTKKDRFS. Residues 1239–1252 are compositionally biased toward basic residues; the sequence is QLHKTKKKAPKVSK.

Functionally, promotes the exchange of Ras-bound GDP by GTP. This Saccharomyces cerevisiae (strain AWRI1631) (Baker's yeast) protein is Guanine nucleotide exchange factor SDC25 (SDC25).